Here is a 124-residue protein sequence, read N- to C-terminus: WAP four-disulfide core domain protein 2 (124 aa).

The signal sequence occupies residues 1-27 (MPACRPGPLAGALLLGLLLLGLPRVPG). 2 WAP domains span residues 29–73 (EVEK…CHLP) and 74–123 (NEKE…VTPI). Cystine bridges form between Cys36/Cys62, Cys45/Cys66, Cys49/Cys61, Cys55/Cys70, Cys80/Cys110, Cys93/Cys114, Cys97/Cys109, and Cys103/Cys119. N-linked (GlcNAc...) asparagine glycosylation occurs at Asn44.

Homotrimer; disulfide-linked. Epididymis. Highest levels are found in the caput and proximal cauda regions. Lower levels in the distal cauda. Not detected in the efferent ducts.

The protein resides in the secreted. Functionally, broad range protease inhibitor. Possible function in sperm maturation. The sequence is that of WAP four-disulfide core domain protein 2 (WFDC2) from Canis lupus familiaris (Dog).